The chain runs to 128 residues: Azurin (128 aa).

The Plastocyanin-like domain maps to 1–128; sequence AECSVDIQGN…AMMKGTLTLK (128 aa). Residues His-46, Cys-112, His-117, and Met-121 each coordinate Cu cation.

It is found in the periplasm. Its function is as follows. Transfers electrons from cytochrome c551 to cytochrome oxidase. The sequence is that of Azurin from Pseudomonas denitrificans.